We begin with the raw amino-acid sequence, 295 residues long: Mitochondrial dicarboxylate transporter (295 aa).

Solcar repeat units follow at residues Lys-4–His-88, Thr-96–Phe-188, and Lys-198–Tyr-286. 6 consecutive transmembrane segments (helical) span residues Tyr-8 to Thr-24, Gly-63 to Tyr-82, Met-98 to Ile-122, Gly-163 to Tyr-182, Leu-204 to Ile-224, and Trp-262 to Met-280.

The protein belongs to the mitochondrial carrier (TC 2.A.29) family. Homodimer.

It is found in the mitochondrion inner membrane. Functionally, mitochondrial dicarboxylic transporter catalyzing the exchange of dicarboxylic acids like malate and succinate for inorganic phosphate. Required for growth on ethanol and acetate. This chain is Mitochondrial dicarboxylate transporter (DIC1), found in Candida glabrata (strain ATCC 2001 / BCRC 20586 / JCM 3761 / NBRC 0622 / NRRL Y-65 / CBS 138) (Yeast).